We begin with the raw amino-acid sequence, 740 residues long: Phosphoribosylformylglycinamidine synthase subunit PurL (740 aa).

H54 is a catalytic residue. Residues Y57 and K96 each coordinate ATP. E98 is a binding site for Mg(2+). Residues 99-102 (SHNH) and R121 each bind substrate. H100 (proton acceptor) is an active-site residue. D122 contributes to the Mg(2+) binding site. Q245 contributes to the substrate binding site. D273 contributes to the Mg(2+) binding site. 317-319 (ESQ) is a substrate binding site. 2 residues coordinate ATP: D499 and G536. Position 537 (N537) interacts with Mg(2+). S539 contacts substrate.

Belongs to the FGAMS family. As to quaternary structure, monomer. Part of the FGAM synthase complex composed of 1 PurL, 1 PurQ and 2 PurS subunits.

It is found in the cytoplasm. It carries out the reaction N(2)-formyl-N(1)-(5-phospho-beta-D-ribosyl)glycinamide + L-glutamine + ATP + H2O = 2-formamido-N(1)-(5-O-phospho-beta-D-ribosyl)acetamidine + L-glutamate + ADP + phosphate + H(+). The protein operates within purine metabolism; IMP biosynthesis via de novo pathway; 5-amino-1-(5-phospho-D-ribosyl)imidazole from N(2)-formyl-N(1)-(5-phospho-D-ribosyl)glycinamide: step 1/2. Part of the phosphoribosylformylglycinamidine synthase complex involved in the purines biosynthetic pathway. Catalyzes the ATP-dependent conversion of formylglycinamide ribonucleotide (FGAR) and glutamine to yield formylglycinamidine ribonucleotide (FGAM) and glutamate. The FGAM synthase complex is composed of three subunits. PurQ produces an ammonia molecule by converting glutamine to glutamate. PurL transfers the ammonia molecule to FGAR to form FGAM in an ATP-dependent manner. PurS interacts with PurQ and PurL and is thought to assist in the transfer of the ammonia molecule from PurQ to PurL. This Anoxybacillus flavithermus (strain DSM 21510 / WK1) protein is Phosphoribosylformylglycinamidine synthase subunit PurL.